An 805-amino-acid chain; its full sequence is FAD-dependent monooxygenase verC1 (805 aa).

A signal peptide spans 1 to 20 (MTFRVIIVGGGVAGLTLASA). Positions 32, 46, and 107 each coordinate FAD. A glycan (N-linked (GlcNAc...) asparagine) is linked at N132. Residue Y214 is part of the active site. D306 and A319 together coordinate FAD. The next 7 membrane-spanning stretches (helical) occupy residues 551–571 (ALTM…AGLG), 604–624 (IAVL…AFFW), 632–652 (SWLF…YLFS), 671–691 (LPVI…FWMW), 703–723 (VFFP…VCAI), 726–746 (WDML…IWDL), and 761–781 (IYGV…LGWL).

This sequence belongs to the paxM FAD-dependent monooxygenase family.

The protein localises to the membrane. Its pathway is secondary metabolite biosynthesis; terpenoid biosynthesis. The protein operates within mycotoxin biosynthesis. FAD-dependent monooxygenase; part of the gene cluster that mediates the biosynthesis of the neurotoxin verrucosidin, a methylated alpha-pyrone polyketide that inhibits oxidative phosphorylation in mitochondria and thereby causes neurological diseases. The carbon backbone of verrucosidin is synthesized by the HR-PKS verA, and further modified by the other verrucodidin cluster enzymes. The polypeptide is FAD-dependent monooxygenase verC1 (Penicillium polonicum).